Here is a 217-residue protein sequence, read N- to C-terminus: ATP-dependent Clp protease proteolytic subunit 2 (217 aa).

The Nucleophile role is filled by serine 121. The active site involves histidine 146.

This sequence belongs to the peptidase S14 family. As to quaternary structure, fourteen ClpP subunits assemble into 2 heptameric rings which stack back to back to give a disk-like structure with a central cavity, resembling the structure of eukaryotic proteasomes.

Its subcellular location is the cytoplasm. The catalysed reaction is Hydrolysis of proteins to small peptides in the presence of ATP and magnesium. alpha-casein is the usual test substrate. In the absence of ATP, only oligopeptides shorter than five residues are hydrolyzed (such as succinyl-Leu-Tyr-|-NHMec, and Leu-Tyr-Leu-|-Tyr-Trp, in which cleavage of the -Tyr-|-Leu- and -Tyr-|-Trp bonds also occurs).. Functionally, cleaves peptides in various proteins in a process that requires ATP hydrolysis. Has a chymotrypsin-like activity. Plays a major role in the degradation of misfolded proteins. This chain is ATP-dependent Clp protease proteolytic subunit 2, found in Paraburkholderia xenovorans (strain LB400).